The primary structure comprises 290 residues: Ribosomal RNA small subunit methyltransferase A (290 aa).

Residues Asn-27, Leu-29, Gly-54, Glu-75, Asp-100, and Asn-125 each contribute to the S-adenosyl-L-methionine site.

Belongs to the class I-like SAM-binding methyltransferase superfamily. rRNA adenine N(6)-methyltransferase family. RsmA subfamily.

The protein localises to the cytoplasm. It carries out the reaction adenosine(1518)/adenosine(1519) in 16S rRNA + 4 S-adenosyl-L-methionine = N(6)-dimethyladenosine(1518)/N(6)-dimethyladenosine(1519) in 16S rRNA + 4 S-adenosyl-L-homocysteine + 4 H(+). Functionally, specifically dimethylates two adjacent adenosines (A1518 and A1519) in the loop of a conserved hairpin near the 3'-end of 16S rRNA in the 30S particle. May play a critical role in biogenesis of 30S subunits. The protein is Ribosomal RNA small subunit methyltransferase A of Streptococcus pyogenes serotype M5 (strain Manfredo).